A 388-amino-acid polypeptide reads, in one-letter code: AT-rich binding protein (388 aa).

The segment at 29–52 (IVCHTCQEELQTQDQFWKHIQDEH) adopts a C2H2-type 1 zinc-finger fold. 2 stretches are compositionally biased toward low complexity: residues 138-165 (QQHQ…LQQQ) and 249-265 (VSVS…STTP). Disordered stretches follow at residues 138 to 168 (QQHQ…QRDV) and 240 to 265 (PPPP…STTP). 2 C2H2-type zinc fingers span residues 321–345 (YVCD…RVVH) and 351–374 (FNCE…KKKH).

The protein resides in the nucleus. Functionally, may be a transcription factor for genes having (A+T) stretches in their promoter and/or enhancer regions. Binds to AT rich DNA. The polypeptide is AT-rich binding protein (Drosophila melanogaster (Fruit fly)).